A 402-amino-acid polypeptide reads, in one-letter code: Phosphoglycerate kinase (402 aa).

Residues 24–26 (DLN), R39, 62–65 (HLGR), R121, and R161 each bind substrate. Residues K211, G299, E330, and 359-362 (GGDS) contribute to the ATP site.

The protein belongs to the phosphoglycerate kinase family. As to quaternary structure, monomer.

Its subcellular location is the cytoplasm. The catalysed reaction is (2R)-3-phosphoglycerate + ATP = (2R)-3-phospho-glyceroyl phosphate + ADP. It participates in carbohydrate degradation; glycolysis; pyruvate from D-glyceraldehyde 3-phosphate: step 2/5. The protein is Phosphoglycerate kinase of Corynebacterium urealyticum (strain ATCC 43042 / DSM 7109).